A 71-amino-acid chain; its full sequence is Large ribosomal subunit protein bL31 (71 aa).

Zn(2+) contacts are provided by Cys-16, Cys-18, Cys-37, and Cys-40.

This sequence belongs to the bacterial ribosomal protein bL31 family. Type A subfamily. Part of the 50S ribosomal subunit. The cofactor is Zn(2+).

Binds the 23S rRNA. The chain is Large ribosomal subunit protein bL31 from Yersinia pseudotuberculosis serotype O:1b (strain IP 31758).